The chain runs to 82 residues: U10-myrmicitoxin-Mri1c (82 aa).

Residues 1–26 (MRLSYVSLTLAIIFVMAIVHAPETEA) form the signal peptide. Positions 27 to 52 (KAYPEADAVGEASAVGEADAVGVADP) are excised as a propeptide. The residue at position 81 (Ile-81) is an Isoleucine amide.

This sequence belongs to the formicidae venom precursor-01 superfamily. As to expression, expressed by the venom gland.

The protein resides in the secreted. Functionally, induces paralysis 5 minutes after injection into blowflies (L.caesar). In most cases is not lethal 24 hours after injection, but paralysis is irreversible. May have antimicrobial properties, like most ant linear peptides. This is U10-myrmicitoxin-Mri1c from Manica rubida (European giant red ant).